The primary structure comprises 168 residues: RxLR effector protein PITG_12737 (168 aa).

The signal sequence occupies residues 1–20 (MRACAILVVAAAAVLTGSTA). Residues 54-77 (RRLRKHKTVNTNSEMEYESEAEAR) carry the RxLR-dEER motif.

It belongs to the RxLR effector family.

The protein resides in the secreted. It localises to the host nucleus. Its subcellular location is the host cytoplasm. Functionally, effector that enhances P.infestans colonization of Nicotiana benthamiana leaves. The sequence is that of RxLR effector protein PITG_12737 from Phytophthora infestans (strain T30-4) (Potato late blight agent).